We begin with the raw amino-acid sequence, 157 residues long: Lipoprotein signal peptidase (157 aa).

A run of 4 helical transmembrane segments spans residues leucine 10–isoleucine 30, tyrosine 36–leucine 56, phenylalanine 58–leucine 78, and leucine 84–leucine 104. Residues aspartate 114 and aspartate 131 contribute to the active site. A helical transmembrane segment spans residues phenylalanine 122–leucine 142.

This sequence belongs to the peptidase A8 family.

It is found in the cell inner membrane. The enzyme catalyses Release of signal peptides from bacterial membrane prolipoproteins. Hydrolyzes -Xaa-Yaa-Zaa-|-(S,diacylglyceryl)Cys-, in which Xaa is hydrophobic (preferably Leu), and Yaa (Ala or Ser) and Zaa (Gly or Ala) have small, neutral side chains.. Its pathway is protein modification; lipoprotein biosynthesis (signal peptide cleavage). In terms of biological role, this protein specifically catalyzes the removal of signal peptides from prolipoproteins. The sequence is that of Lipoprotein signal peptidase from Helicobacter pylori (strain P12).